Reading from the N-terminus, the 184-residue chain is Large ribosomal subunit protein uL6 (184 aa).

This sequence belongs to the universal ribosomal protein uL6 family. As to quaternary structure, part of the 50S ribosomal subunit.

In terms of biological role, this protein binds to the 23S rRNA, and is important in its secondary structure. It is located near the subunit interface in the base of the L7/L12 stalk, and near the tRNA binding site of the peptidyltransferase center. This is Large ribosomal subunit protein uL6 from Aster yellows witches'-broom phytoplasma (strain AYWB).